We begin with the raw amino-acid sequence, 536 residues long: Phosphoenolpyruvate carboxykinase (ATP) (536 aa).

Residues arginine 61, tyrosine 195, and lysine 201 each contribute to the substrate site. Residues lysine 201, histidine 220, and 236–244 (GLSGTGKTT) contribute to the ATP site. Mn(2+) contacts are provided by lysine 201 and histidine 220. A Mn(2+)-binding site is contributed by aspartate 257. ATP contacts are provided by glutamate 285, arginine 322, and threonine 447. Arginine 322 serves as a coordination point for substrate.

The protein belongs to the phosphoenolpyruvate carboxykinase (ATP) family. It depends on Mn(2+) as a cofactor.

Its subcellular location is the cytoplasm. It carries out the reaction oxaloacetate + ATP = phosphoenolpyruvate + ADP + CO2. The protein operates within carbohydrate biosynthesis; gluconeogenesis. In terms of biological role, involved in the gluconeogenesis. Catalyzes the conversion of oxaloacetate (OAA) to phosphoenolpyruvate (PEP) through direct phosphoryl transfer between the nucleoside triphosphate and OAA. The polypeptide is Phosphoenolpyruvate carboxykinase (ATP) (Agrobacterium fabrum (strain C58 / ATCC 33970) (Agrobacterium tumefaciens (strain C58))).